We begin with the raw amino-acid sequence, 123 residues long: Large ribosomal subunit protein uL29 (123 aa).

The tract at residues 84–123 is disordered; the sequence is RPKKTRAMRRRLNKHEEGLKTKKQQRKERLYPPRKYAVKA. Over residues 86–96 the composition is skewed to basic residues; it reads KKTRAMRRRLN.

It belongs to the universal ribosomal protein uL29 family. Component of the large ribosomal subunit.

It localises to the cytoplasm. Its function is as follows. Component of the large ribosomal subunit. The ribosome is a large ribonucleoprotein complex responsible for the synthesis of proteins in the cell. The protein is Large ribosomal subunit protein uL29 (RPL35) of Ophiophagus hannah (King cobra).